A 346-amino-acid polypeptide reads, in one-letter code: dTDP-glucose 4,6-dehydratase (346 aa).

Residues 17-18 (FI), 38-41 (DKLT), 64-65 (DI), 86-90 (LAAES), and threonine 105 each bind NAD(+). Serine 90 is a binding site for substrate. Threonine 139 contributes to the substrate binding site. The active-site Proton donor is the aspartate 140. Catalysis depends on proton acceptor residues glutamate 141 and tyrosine 165. 165 to 169 (YSASK) lines the NAD(+) pocket. Asparagine 194 contributes to the substrate binding site. Asparagine 195 contacts NAD(+). Substrate-binding positions include 204–205 (KL), 220–222 (PVY), arginine 229, asparagine 264, and 298–302 (DRPGH).

The protein belongs to the NAD(P)-dependent epimerase/dehydratase family. dTDP-glucose dehydratase subfamily. In terms of assembly, homodimer. Requires NAD(+) as cofactor.

It carries out the reaction dTDP-alpha-D-glucose = dTDP-4-dehydro-6-deoxy-alpha-D-glucose + H2O. It participates in carbohydrate biosynthesis; dTDP-L-rhamnose biosynthesis. Its pathway is bacterial outer membrane biogenesis; LPS O-antigen biosynthesis. Functionally, catalyzes the dehydration of dTDP-D-glucose to form dTDP-6-deoxy-D-xylo-4-hexulose via a three-step process involving oxidation, dehydration and reduction. This Neisseria gonorrhoeae protein is dTDP-glucose 4,6-dehydratase.